Here is a 147-residue protein sequence, read N- to C-terminus: Ubiquitin-conjugating enzyme E2 D4 (147 aa).

The UBC core domain occupies 1 to 147 (MALKRIQKEL…AREWTQKYAM (147 aa)). Cysteine 85 functions as the Glycyl thioester intermediate in the catalytic mechanism.

It belongs to the ubiquitin-conjugating enzyme family.

It catalyses the reaction S-ubiquitinyl-[E1 ubiquitin-activating enzyme]-L-cysteine + [E2 ubiquitin-conjugating enzyme]-L-cysteine = [E1 ubiquitin-activating enzyme]-L-cysteine + S-ubiquitinyl-[E2 ubiquitin-conjugating enzyme]-L-cysteine.. Its pathway is protein modification; protein ubiquitination. Its function is as follows. Accepts ubiquitin from the E1 complex and catalyzes its covalent attachment to other proteins. In vitro able to promote polyubiquitination using all 7 ubiquitin Lys residues, but may prefer 'Lys-11' and 'Lys-48'-linked polyubiquitination. This Homo sapiens (Human) protein is Ubiquitin-conjugating enzyme E2 D4 (UBE2D4).